The following is a 198-amino-acid chain: Recombination protein RecR (198 aa).

The C4-type zinc-finger motif lies at 57-72 (CEKCNTFTEAQICEVC). In terms of domain architecture, Toprim spans 80 to 175 (TLLCVVETPA…SVTRLARGVP (96 aa)).

Belongs to the RecR family.

Its function is as follows. May play a role in DNA repair. It seems to be involved in an RecBC-independent recombinational process of DNA repair. It may act with RecF and RecO. This chain is Recombination protein RecR, found in Paraburkholderia phymatum (strain DSM 17167 / CIP 108236 / LMG 21445 / STM815) (Burkholderia phymatum).